The chain runs to 485 residues: Cysteine--tRNA ligase (485 aa).

Residue Cys27 participates in Zn(2+) binding. A 'HIGH' region motif is present at residues 29–39 (ITAYDLCHIGH). Zn(2+)-binding residues include Cys208, His233, and Glu237. The 'KMSKS' region signature appears at 265–269 (KMSKS). Residue Lys268 coordinates ATP.

The protein belongs to the class-I aminoacyl-tRNA synthetase family. In terms of assembly, monomer. Requires Zn(2+) as cofactor.

Its subcellular location is the cytoplasm. It carries out the reaction tRNA(Cys) + L-cysteine + ATP = L-cysteinyl-tRNA(Cys) + AMP + diphosphate. In Maridesulfovibrio salexigens (strain ATCC 14822 / DSM 2638 / NCIMB 8403 / VKM B-1763) (Desulfovibrio salexigens), this protein is Cysteine--tRNA ligase.